The following is a 1553-amino-acid chain: DNA topoisomerase 2-alpha (1553 aa).

The disordered stretch occupies residues 1-25 (MELLDSPAPLRPLHDNPRLPKADGA). Residues 12–25 (PLHDNPRLPKADGA) show a composition bias toward basic and acidic residues. Residues Asn-92, Asn-121, 149-151 (SSN), and 162-169 (GRNGYGAK) contribute to the ATP site. The tract at residues 343-345 (KKK) is interaction with DNA. ATP is bound at residue 377-379 (QTK). One can recognise a Toprim domain in the interval 456-573 (CTLILTEGDS…SLLRHNFLEE (118 aa)). 3 residues coordinate Mg(2+): Glu-462, Asp-542, and Asp-544. The Topo IIA-type catalytic domain occupies 716-1163 (IPSLVDGLKP…SPSDLWKEDL (448 aa)). Catalysis depends on Tyr-806, which acts as the O-(5'-phospho-DNA)-tyrosine intermediate. The interval 991-1000 (KLQTNLTCNS) is interaction with DNA. Disordered stretches follow at residues 1095 to 1114 (QNKE…AATG) and 1186 to 1553 (TGKP…DDMF). The segment covering 1098-1107 (EEEEGDESGE) has biased composition (acidic residues). Positions 1242–1262 (SEKNESDEKQEGNSSGDKEPS) are enriched in basic and acidic residues. Composition is skewed to acidic residues over residues 1300-1310 (SESDSESDDFE) and 1334-1349 (SDAD…EYQE). Positions 1371 to 1385 (VPKEKKGKAPKEKPL) are enriched in basic and acidic residues. Over residues 1413 to 1432 (PRAQAVPKKPAAAKKGSTAK) the composition is skewed to low complexity. Over residues 1444 to 1454 (KKKAAPKAPRR) the composition is skewed to basic residues. The span at 1517-1532 (SIDLTADSPAAAAPRT) shows a compositional bias: low complexity.

The protein belongs to the type II topoisomerase family. In terms of assembly, homodimer. The cofactor is Mg(2+). Mn(2+) serves as cofactor. Ca(2+) is required as a cofactor.

It is found in the cytoplasm. It localises to the nucleus. The protein localises to the nucleoplasm. The protein resides in the nucleolus. It catalyses the reaction ATP-dependent breakage, passage and rejoining of double-stranded DNA.. Key decatenating enzyme that alters DNA topology by binding to two double-stranded DNA molecules, generating a double-stranded break in one of the strands, passing the intact strand through the broken strand, and religating the broken strand. May play a role in the regulation of circadian rhythm. This is DNA topoisomerase 2-alpha (TOP2A) from Gallus gallus (Chicken).